A 581-amino-acid chain; its full sequence is A-type ATP synthase subunit A (581 aa).

Glycine 232 to threonine 239 is an ATP binding site.

Belongs to the ATPase alpha/beta chains family. In terms of assembly, has multiple subunits with at least A(3), B(3), C, D, E, F, H, I and proteolipid K(x).

It is found in the cell membrane. It catalyses the reaction ATP + H2O + 4 H(+)(in) = ADP + phosphate + 5 H(+)(out). Its function is as follows. Component of the A-type ATP synthase that produces ATP from ADP in the presence of a proton gradient across the membrane. The A chain is the catalytic subunit. In Methanocorpusculum labreanum (strain ATCC 43576 / DSM 4855 / Z), this protein is A-type ATP synthase subunit A.